A 352-amino-acid chain; its full sequence is uncharacterized protein (352 aa).

Residues 285–352 (FQHLRNARER…IKSEIRRLQR (68 aa)) adopt a coiled-coil conformation.

This is an uncharacterized protein from Emericella nidulans (strain FGSC A4 / ATCC 38163 / CBS 112.46 / NRRL 194 / M139) (Aspergillus nidulans).